The sequence spans 51 residues: Cyclic phosphodiesterase (51 aa).

His-11 acts as the Proton donor/acceptor in catalysis. Thr-13 is a binding site for substrate. Catalysis depends on His-38, which acts as the Proton donor/acceptor. The substrate site is built by Ser-40 and Tyr-43.

It belongs to the 2H phosphoesterase superfamily. CPD1 family.

Functionally, hydrolyzes ADP-ribose 1'',2''-cyclic phosphate (Appr&gt;1) that is produced during tRNA splicing into ADP-ribose 1''-phosphate (Appr-1''p). The sequence is that of Cyclic phosphodiesterase from Triticum aestivum (Wheat).